An 874-amino-acid chain; its full sequence is Alanine--tRNA ligase (874 aa).

Zn(2+) contacts are provided by H562, H566, C664, and H668.

It belongs to the class-II aminoacyl-tRNA synthetase family. The cofactor is Zn(2+).

It is found in the cytoplasm. The enzyme catalyses tRNA(Ala) + L-alanine + ATP = L-alanyl-tRNA(Ala) + AMP + diphosphate. Catalyzes the attachment of alanine to tRNA(Ala) in a two-step reaction: alanine is first activated by ATP to form Ala-AMP and then transferred to the acceptor end of tRNA(Ala). Also edits incorrectly charged Ser-tRNA(Ala) and Gly-tRNA(Ala) via its editing domain. The chain is Alanine--tRNA ligase from Shewanella putrefaciens (strain CN-32 / ATCC BAA-453).